The following is a 491-amino-acid chain: Glutamyl-tRNA(Gln) amidotransferase subunit A (491 aa).

Active-site charge relay system residues include Lys77 and Ser152. The active-site Acyl-ester intermediate is Ser176.

It belongs to the amidase family. GatA subfamily. As to quaternary structure, heterotrimer of A, B and C subunits.

The catalysed reaction is L-glutamyl-tRNA(Gln) + L-glutamine + ATP + H2O = L-glutaminyl-tRNA(Gln) + L-glutamate + ADP + phosphate + H(+). Allows the formation of correctly charged Gln-tRNA(Gln) through the transamidation of misacylated Glu-tRNA(Gln) in organisms which lack glutaminyl-tRNA synthetase. The reaction takes place in the presence of glutamine and ATP through an activated gamma-phospho-Glu-tRNA(Gln). The chain is Glutamyl-tRNA(Gln) amidotransferase subunit A from Chlamydia felis (strain Fe/C-56) (Chlamydophila felis).